We begin with the raw amino-acid sequence, 146 residues long: MSAALSRDATLLAFDYGEKRIGVAVGNLLTRTARALVIVRNLNREHRFKAVGELIAEWKPDALVVGLPLHPDGAPHEMTQRAMRFGNQLNGRFNLPVSWVDERYSSVEARAGLRARGDAADRVDAEAARVILQQYLDGLPDHHEFN.

The protein belongs to the YqgF nuclease family.

It localises to the cytoplasm. Its function is as follows. Could be a nuclease involved in processing of the 5'-end of pre-16S rRNA. The protein is Putative pre-16S rRNA nuclease of Burkholderia mallei (strain SAVP1).